The chain runs to 233 residues: MSVVTSIRKSLVPIHREGYPFIAIAVVIALGLMVFSTFLGMIGVGLAIWTALFFRDPPRVTPVRDGLVVAPADGRISQVGLARPPRELDLSDEPLLRVSIFMNVFNVHVNRAPVTGRIERLAYKPGLFLNADLDKASEDNERNGLVISTPLCRVGVVQIAGLIARRIVSFVREGESIGVGERFGLIRFGSRVDVYLPVGTRVLVSEGQLTVAGETVLCDLSAQQPRETAYRVS.

Residue S190 is the Schiff-base intermediate with substrate; via pyruvic acid of the active site. A Pyruvic acid (Ser); by autocatalysis modification is found at S190.

This sequence belongs to the phosphatidylserine decarboxylase family. PSD-A subfamily. Heterodimer of a large membrane-associated beta subunit and a small pyruvoyl-containing alpha subunit. It depends on pyruvate as a cofactor. Post-translationally, is synthesized initially as an inactive proenzyme. Formation of the active enzyme involves a self-maturation process in which the active site pyruvoyl group is generated from an internal serine residue via an autocatalytic post-translational modification. Two non-identical subunits are generated from the proenzyme in this reaction, and the pyruvate is formed at the N-terminus of the alpha chain, which is derived from the carboxyl end of the proenzyme. The post-translation cleavage follows an unusual pathway, termed non-hydrolytic serinolysis, in which the side chain hydroxyl group of the serine supplies its oxygen atom to form the C-terminus of the beta chain, while the remainder of the serine residue undergoes an oxidative deamination to produce ammonia and the pyruvoyl prosthetic group on the alpha chain.

The protein localises to the cell membrane. The enzyme catalyses a 1,2-diacyl-sn-glycero-3-phospho-L-serine + H(+) = a 1,2-diacyl-sn-glycero-3-phosphoethanolamine + CO2. It functions in the pathway phospholipid metabolism; phosphatidylethanolamine biosynthesis; phosphatidylethanolamine from CDP-diacylglycerol: step 2/2. Functionally, catalyzes the formation of phosphatidylethanolamine (PtdEtn) from phosphatidylserine (PtdSer). The polypeptide is Phosphatidylserine decarboxylase proenzyme (Xanthobacter autotrophicus (strain ATCC BAA-1158 / Py2)).